Reading from the N-terminus, the 169-residue chain is Photosystem I assembly protein Ycf3 (169 aa).

3 TPR repeats span residues 36 to 69, 73 to 106, and 121 to 154; these read AFTY…EIDP, SYIL…NPFL, and GEQA…TPGN.

It belongs to the Ycf3 family.

The protein localises to the plastid. The protein resides in the chloroplast thylakoid membrane. Functionally, essential for the assembly of the photosystem I (PSI) complex. May act as a chaperone-like factor to guide the assembly of the PSI subunits. The protein is Photosystem I assembly protein Ycf3 of Cucumis sativus (Cucumber).